The primary structure comprises 283 residues: (+)-borneol dehydrogenase 2 (283 aa).

NAD(+) contacts are provided by residues 27–33 (GGSSGIG), Asp51, 76–77 (DV), and 103–105 (NAG). The active-site Proton donor is Ser157. Residues Tyr170, Lys174, and Thr205 each coordinate NAD(+). Tyr170 functions as the Proton acceptor in the catalytic mechanism. The active-site Proton donor/acceptor is Lys174.

This sequence belongs to the short-chain dehydrogenases/reductases (SDR) family.

It carries out the reaction (1R,2S,4R)-borneol + NAD(+) = (1R,4R)-camphor + NADH + H(+). Its function is as follows. Involved in the biosynthesis of monoterpene natural products related to camphor. Catalayzes the oxidation of (+)-borneol to (+)-camphor. Shows absolute selectivity towards (+)-borneol. Catalyzes the oxidation of (+)-isoborneol to (-)-camphor. Shows absolute selectivity towards (+)-isoborneol. The polypeptide is (+)-borneol dehydrogenase 2 (Salvia officinalis (Sage)).